The following is a 377-amino-acid chain: Lactosylceramide 1,3-N-acetyl-beta-D-glucosaminyltransferase B (377 aa).

The Cytoplasmic portion of the chain corresponds to 1 to 13; it reads MLISARRLRRCQS. The chain crosses the membrane as a helical; Signal-anchor for type II membrane protein span at residues 14-30; it reads LQLLASCFVLSLMALLV. Residues 31 to 377 are Lumenal-facing; sequence QEDNSLVNHV…DTYPCSAAWS (347 aa). Residues asparagine 56, asparagine 167, and asparagine 275 are each glycosylated (N-linked (GlcNAc...) asparagine).

This sequence belongs to the glycosyltransferase 31 family.

The protein resides in the golgi apparatus membrane. It carries out the reaction a beta-D-Gal-(1-&gt;4)-beta-D-Glc-(1&lt;-&gt;1)-Cer(d18:1(4E)) + UDP-N-acetyl-alpha-D-glucosamine = a beta-D-GlcNAc-(1-&gt;3)-beta-D-Gal-(1-&gt;4)-beta-D-Glc-(1&lt;-&gt;1)-Cer(d18:1(4E)) + UDP + H(+). It catalyses the reaction a neolactoside nLc4Cer(d18:1(4E)) + UDP-N-acetyl-alpha-D-glucosamine = a neolactoside IV(3)-beta-GlcNAc-nLc4Cer(d18:1(4E)) + UDP + H(+). Its pathway is protein modification; protein glycosylation. Its function is as follows. Beta-1,3-N-acetylglucosaminyltransferase that plays a key role in the synthesis of lacto- or neolacto-series carbohydrate chains on glycolipids. This is Lactosylceramide 1,3-N-acetyl-beta-D-glucosaminyltransferase B (b3gnt5-b) from Xenopus laevis (African clawed frog).